A 278-amino-acid polypeptide reads, in one-letter code: HTH-type transcriptional activator RhaS (278 aa).

The HTH araC/xylS-type domain maps to 174–272 (NQLMAWLEDH…NWSPRDIRQG (99 aa)). 2 DNA-binding regions (H-T-H motif) span residues 191-212 (EAVAEQFSLSLRTLHRQLKQHT) and 239-262 (VTEIAYRCGFGDSNHFSTLFRREF).

Binds DNA as a dimer.

It localises to the cytoplasm. Functionally, activates expression of the rhaBAD and rhaT operons. This Salmonella paratyphi A (strain ATCC 9150 / SARB42) protein is HTH-type transcriptional activator RhaS.